Consider the following 846-residue polypeptide: Structure-specific endonuclease subunit SLX4 (846 aa).

7 disordered regions span residues 1 to 20 (MTDHGPDALDAFSPPRVGSA), 84 to 111 (KAGAENLPVHRTKRRKLGNQRDNTAESM), 123 to 164 (QPAE…VKKA), 283 to 322 (RTSKSLDSESLDTGTSSTSEGNGKRKQTKKAKRSAKSKIT), 480 to 513 (DPTPKITPKPGDERQSNLSNKNTERNIPEESSLL), 624 to 690 (PPNA…MGSQ), and 723 to 751 (TLASRSASSHITPQISSAPSQTVPIQTRA). Positions 141–153 (KPSEKGQKSEKTA) are enriched in basic and acidic residues. Polar residues predominate over residues 293 to 303 (LDTGTSSTSEG). Positions 306 to 318 (KRKQTKKAKRSAK) are enriched in basic residues. Polar residues-rich tracts occupy residues 657–680 (KEITNPARSSWSTAKNLKSSSKPT) and 725–751 (ASRSASSHITPQISSAPSQTVPIQTRA).

The protein belongs to the SLX4 family. As to quaternary structure, forms a heterodimer with SLX1. Post-translationally, phosphorylated in response to DNA damage.

The protein localises to the nucleus. Its function is as follows. Regulatory subunit of the SLX1-SLX4 structure-specific endonuclease that resolves DNA secondary structures generated during DNA repair and recombination. Has endonuclease activity towards branched DNA substrates, introducing single-strand cuts in duplex DNA close to junctions with ss-DNA. In Arthroderma otae (strain ATCC MYA-4605 / CBS 113480) (Microsporum canis), this protein is Structure-specific endonuclease subunit SLX4.